The primary structure comprises 343 residues: Coiled-coil domain-containing protein 97 (343 aa).

Position 1 is an N-acetylmethionine (methionine 1). Positions 1–37 are disordered; the sequence is MEAVATATAAKEPDKGCIEPGPGHWGELSRTPVPSKP. Phosphothreonine is present on threonine 47. 3 disordered regions span residues 200–220, 234–277, and 292–343; these read ARTP…ACPL, QQRL…DSEE, and RFLD…LDGD. Positions 224-262 form a coiled coil; that stretch reads LLQSYEERELQQRLLQQQEEEEACLEEEEEEEDSDEEDQ. Residues 241-261 are compositionally biased toward acidic residues; sequence QEEEEACLEEEEEEEDSDEED. Basic and acidic residues predominate over residues 262–277; it reads QRSGKDSEAWVPDSEE. Phosphoserine occurs at positions 275 and 337. Positions 324–343 are enriched in acidic residues; that stretch reads ERYFDEEEPEDAPSPELDGD.

Associates with splicing factor SF3B complex, involved in branch-site recognition.

The protein resides in the nucleus. Functionally, may play a role pre-mRNA splicing through the association with the splicing factor SF3B complex which is involved in branch-site recognition. The protein is Coiled-coil domain-containing protein 97 (CCDC97) of Homo sapiens (Human).